The primary structure comprises 532 residues: Flavin-containing monooxygenase 1 (532 aa).

The Lumenal portion of the chain corresponds to 1 to 510 (MVKRVAIVGA…TRTIQESPSS (510 aa)). FAD contacts are provided by residues 9-13 (GAGVS), Glu32, 40-41 (LW), and 61-62 (NS). NADP(+) is bound by residues 60–61 (SN) and 195–198 (SGTD). Residues 511–531 (FETLLKLFSFLALLIAVFLIF) traverse the membrane as a helical segment. A topological domain (cytoplasmic) is located at residue Leu532.

This sequence belongs to the FMO family. Requires FAD as cofactor. In terms of tissue distribution, liver.

It is found in the endoplasmic reticulum membrane. The enzyme catalyses hypotaurine + NADPH + O2 + H(+) = taurine + NADP(+) + H2O. The catalysed reaction is hypotaurine + NADH + O2 + H(+) = taurine + NAD(+) + H2O. It catalyses the reaction trimethylamine + NADPH + O2 = trimethylamine N-oxide + NADP(+) + H2O. It carries out the reaction N,N-dimethylaniline + NADPH + O2 + H(+) = N,N-dimethylaniline N-oxide + NADP(+) + H2O. Functionally, broad spectrum monooxygenase that catalyzes the oxygenation of a wide variety of nitrogen- and sulfur-containing compounds including xenobiotics. Catalyzes the S-oxygenation of hypotaurine to produce taurine, an organic osmolyte involved in cell volume regulation as well as a variety of cytoprotective and developmental processes. In vitro, catalyzes the N-oxygenation of trimethylamine (TMA) to produce trimethylamine N-oxide (TMAO) and could therefore participate to the detoxification of this compound that is generated by the action of gut microbiota from dietary precursors such as choline, choline containing compounds, betaine or L-carnitine. This chain is Flavin-containing monooxygenase 1, found in Mus musculus (Mouse).